A 146-amino-acid polypeptide reads, in one-letter code: Universal stress protein A homolog 2 (146 aa).

The protein belongs to the universal stress protein A family. In terms of assembly, homodimer.

It is found in the cytoplasm. Its function is as follows. Involved in stress response. The protein is Universal stress protein A homolog 2 (uspA2) of Coxiella burnetii (strain RSA 493 / Nine Mile phase I).